The sequence spans 199 residues: NAD(P)H dehydrogenase (quinone) (199 aa).

The Flavodoxin-like domain occupies 4–190 (VLVLYYSAYG…AGARYQGRVI (187 aa)). Residues 10-15 (SAYGHI) and 78-80 (TRF) contribute to the FMN site. NAD(+) is bound at residue tyrosine 12. Tryptophan 98 serves as a coordination point for substrate. FMN is bound by residues 113–119 (STATQHG) and histidine 134.

This sequence belongs to the WrbA family. FMN serves as cofactor.

The catalysed reaction is a quinone + NADH + H(+) = a quinol + NAD(+). It carries out the reaction a quinone + NADPH + H(+) = a quinol + NADP(+). The chain is NAD(P)H dehydrogenase (quinone) from Bradyrhizobium sp. (strain ORS 278).